A 500-amino-acid polypeptide reads, in one-letter code: MSGPGPREPPPEAGAAGGEAAVEGAGGGDAALGEPGLSFTTTDLSLVEMTEVEYTQLQHILCSHMEAAADGELETRLNSALLAAAGPGAGAGGFAAGGQGGAAPVYPVLCPSALAADAPCLGHIDFQELRMMLLSEAGAAEKTSGGGDGARARADGAAKEGAGAAAAAAGPDGAPEARAKPAVRVRLEDRFNSIPAEPPPAPRGPEPPEPGGALNNLVTLIRHPSELMNVPLQQQNKCTALVKNKTAATTTALQFTYPLFTTNACSTSGNSNLSQTQSSSNSCSVLEAAKHQDIGLPRAFSFCYQQEIESTKQTLGSRNKVLPEQVWIKVGEAALCKQALKRNRSRMRQLDTNVERRALGEIQNVGEGATATQGAWQSSESSQANLGEQAQSGPQGGRSQRRERHNRMERDRRRRIRICCDELNLLVPFCNAETDKATTLQWTTAFLKYIQERHGDSLKKEFESVFCGKTGRRLKLTRPDSLVTCPAQGSLQSSPSMEIK.

Pro residues-rich tracts occupy residues 1-12 and 196-210; these read MSGPGPREPPPE and AEPPPAPRGPEPPEP. 2 disordered regions span residues 1 to 34 and 191 to 211; these read MSGPGPREPPPEAGAAGGEAAVEGAGGGDAALGE and FNSIPAEPPPAPRGPEPPEPG. The interval 347–356 is R3 epitope (recognized by Chagas's antibodies); the sequence is MRQLDTNVER. Residues 365–410 form a disordered region; it reads VGEGATATQGAWQSSESSQANLGEQAQSGPQGGRSQRRERHNRMER. Residues 370 to 393 show a composition bias toward polar residues; it reads TATQGAWQSSESSQANLGEQAQSG. The region spanning 400 to 450 is the bHLH domain; the sequence is QRRERHNRMERDRRRRIRICCDELNLLVPFCNAETDKATTLQWTTAFLKYI. The R1 epitope (recognized by Chagas's antibodies) stretch occupies residues 481 to 500; that stretch reads SLVTCPAQGSLQSSPSMEIK.

Efficient DNA binding requires dimerization with another bHLH protein. In terms of tissue distribution, isoform 3 is testis specific. Isoform 2 is pancreas specific.

The protein resides in the nucleus. Putative transcription factor. Isoform 3 may play a role in early spermatogenesis. The sequence is that of Transcription factor-like 5 protein (TCFL5) from Homo sapiens (Human).